The following is a 152-amino-acid chain: Interleukin-1 family member 10 (152 aa).

Belongs to the IL-1 family. In terms of assembly, interacts with cargo receptor TMED10; the interaction mediates the translocation from the cytoplasm into the ERGIC (endoplasmic reticulum-Golgi intermediate compartment) and thereby secretion.

Its subcellular location is the cytoplasm. The protein localises to the endoplasmic reticulum-Golgi intermediate compartment. The protein resides in the secreted. Its function is as follows. Cytokine with immunomodulatory activity. Alone, does not induce cytokine production, but reduces IL22 and IL17A production by T-cells in response to heat-killed Candida albicans. Reduces IL36G-induced production of IL8 by peripheral blood mononuclear cells. Increases IL6 production by dendritic cells stimulated by bacterial lipopolysaccharides (LPS). Ligand for IL-36R/IL1RL2. In Mus musculus (Mouse), this protein is Interleukin-1 family member 10 (Il1f10).